Here is a 62-residue protein sequence, read N- to C-terminus: Protein DsrB (62 aa).

This sequence belongs to the DsrB family.

This Escherichia fergusonii (strain ATCC 35469 / DSM 13698 / CCUG 18766 / IAM 14443 / JCM 21226 / LMG 7866 / NBRC 102419 / NCTC 12128 / CDC 0568-73) protein is Protein DsrB.